Reading from the N-terminus, the 218-residue chain is Phosphoribosylformylglycinamidine synthase subunit PurQ (218 aa).

In terms of domain architecture, Glutamine amidotransferase type-1 spans 2-218; it reads RVGVIRFPGS…FFRGILKFRG (217 aa). The Nucleophile role is filled by Cys-85. Residues His-192 and Glu-194 contribute to the active site.

Part of the FGAM synthase complex composed of 1 PurL, 1 PurQ and 2 PurS subunits.

The protein resides in the cytoplasm. The catalysed reaction is N(2)-formyl-N(1)-(5-phospho-beta-D-ribosyl)glycinamide + L-glutamine + ATP + H2O = 2-formamido-N(1)-(5-O-phospho-beta-D-ribosyl)acetamidine + L-glutamate + ADP + phosphate + H(+). It catalyses the reaction L-glutamine + H2O = L-glutamate + NH4(+). It participates in purine metabolism; IMP biosynthesis via de novo pathway; 5-amino-1-(5-phospho-D-ribosyl)imidazole from N(2)-formyl-N(1)-(5-phospho-D-ribosyl)glycinamide: step 1/2. Its function is as follows. Part of the phosphoribosylformylglycinamidine synthase complex involved in the purines biosynthetic pathway. Catalyzes the ATP-dependent conversion of formylglycinamide ribonucleotide (FGAR) and glutamine to yield formylglycinamidine ribonucleotide (FGAM) and glutamate. The FGAM synthase complex is composed of three subunits. PurQ produces an ammonia molecule by converting glutamine to glutamate. PurL transfers the ammonia molecule to FGAR to form FGAM in an ATP-dependent manner. PurS interacts with PurQ and PurL and is thought to assist in the transfer of the ammonia molecule from PurQ to PurL. The chain is Phosphoribosylformylglycinamidine synthase subunit PurQ from Methanothermobacter thermautotrophicus (strain ATCC 29096 / DSM 1053 / JCM 10044 / NBRC 100330 / Delta H) (Methanobacterium thermoautotrophicum).